A 174-amino-acid polypeptide reads, in one-letter code: Large ribosomal subunit protein uL10 (174 aa).

This sequence belongs to the universal ribosomal protein uL10 family. As to quaternary structure, part of the ribosomal stalk of the 50S ribosomal subunit. The N-terminus interacts with L11 and the large rRNA to form the base of the stalk. The C-terminus forms an elongated spine to which L12 dimers bind in a sequential fashion forming a multimeric L10(L12)X complex.

Forms part of the ribosomal stalk, playing a central role in the interaction of the ribosome with GTP-bound translation factors. The sequence is that of Large ribosomal subunit protein uL10 from Pelobacter propionicus (strain DSM 2379 / NBRC 103807 / OttBd1).